A 180-amino-acid chain; its full sequence is ATP synthase subunit delta (180 aa).

Belongs to the ATPase delta chain family. In terms of assembly, F-type ATPases have 2 components, F(1) - the catalytic core - and F(0) - the membrane proton channel. F(1) has five subunits: alpha(3), beta(3), gamma(1), delta(1), epsilon(1). F(0) has three main subunits: a(1), b(2) and c(10-14). The alpha and beta chains form an alternating ring which encloses part of the gamma chain. F(1) is attached to F(0) by a central stalk formed by the gamma and epsilon chains, while a peripheral stalk is formed by the delta and b chains.

Its subcellular location is the cell membrane. Its function is as follows. F(1)F(0) ATP synthase produces ATP from ADP in the presence of a proton or sodium gradient. F-type ATPases consist of two structural domains, F(1) containing the extramembraneous catalytic core and F(0) containing the membrane proton channel, linked together by a central stalk and a peripheral stalk. During catalysis, ATP synthesis in the catalytic domain of F(1) is coupled via a rotary mechanism of the central stalk subunits to proton translocation. In terms of biological role, this protein is part of the stalk that links CF(0) to CF(1). It either transmits conformational changes from CF(0) to CF(1) or is implicated in proton conduction. In Alkaliphilus oremlandii (strain OhILAs) (Clostridium oremlandii (strain OhILAs)), this protein is ATP synthase subunit delta.